Consider the following 320-residue polypeptide: o-succinylbenzoate synthase (320 aa).

Residue lysine 133 is the Proton donor of the active site. 3 residues coordinate Mg(2+): aspartate 161, glutamate 190, and aspartate 213. Lysine 235 serves as the catalytic Proton acceptor.

It belongs to the mandelate racemase/muconate lactonizing enzyme family. MenC type 1 subfamily. A divalent metal cation serves as cofactor.

The catalysed reaction is (1R,6R)-6-hydroxy-2-succinyl-cyclohexa-2,4-diene-1-carboxylate = 2-succinylbenzoate + H2O. The protein operates within quinol/quinone metabolism; 1,4-dihydroxy-2-naphthoate biosynthesis; 1,4-dihydroxy-2-naphthoate from chorismate: step 4/7. Its pathway is quinol/quinone metabolism; menaquinone biosynthesis. Its function is as follows. Converts 2-succinyl-6-hydroxy-2,4-cyclohexadiene-1-carboxylate (SHCHC) to 2-succinylbenzoate (OSB). This chain is o-succinylbenzoate synthase, found in Escherichia fergusonii (strain ATCC 35469 / DSM 13698 / CCUG 18766 / IAM 14443 / JCM 21226 / LMG 7866 / NBRC 102419 / NCTC 12128 / CDC 0568-73).